The chain runs to 287 residues: Ribonuclease Z (287 aa).

His-64, His-66, Asp-68, His-69, His-124, Asp-191, and His-250 together coordinate Zn(2+). Residue Asp-68 is the Proton acceptor of the active site.

It belongs to the RNase Z family. In terms of assembly, homodimer. It depends on Zn(2+) as a cofactor.

The catalysed reaction is Endonucleolytic cleavage of RNA, removing extra 3' nucleotides from tRNA precursor, generating 3' termini of tRNAs. A 3'-hydroxy group is left at the tRNA terminus and a 5'-phosphoryl group is left at the trailer molecule.. Its function is as follows. Zinc phosphodiesterase, which displays some tRNA 3'-processing endonuclease activity. Probably involved in tRNA maturation, by removing a 3'-trailer from precursor tRNA. The chain is Ribonuclease Z from Pyrobaculum aerophilum (strain ATCC 51768 / DSM 7523 / JCM 9630 / CIP 104966 / NBRC 100827 / IM2).